We begin with the raw amino-acid sequence, 312 residues long: MMKSNQSTVSEFILLGLPIQPEDQAVYFALFLAMYLTTVLGNLLIILLIRLDSHLHTPMYFFLSHLAFTDISFSSVTAPKMLMNMLTHSQSISHAGCVSQIYFFLLFGCIDNFLLTSMAYDRYVAICHPLHYTTIMSQSLCVLLVMVSWAFSSSNGLVHTLLFARLSLFRDNTVHHFFCDLSALLKLSSSDTTINELVILTLAVVVITVPFICILVSYGHIGATILRTPSIKGICKALSTCGSHLCVVSLYYGAIIGLYFFPSSNNTNDKDVIVAVLYTVVTPMLNPFIYSLRNRDINGALRKTLSRRLCSH.

Transmembrane regions (helical) follow at residues 29–49 (ALFL…ILLI), 58–78 (PMYF…SVTA), 95–115 (AGCV…NFLL), 143–163 (LLVM…TLLF), 197–217 (LVIL…ILVS), 241–261 (CGSH…LYFF), and 272–292 (VIVA…IYSL).

Belongs to the G-protein coupled receptor 1 family.

The protein resides in the cell membrane. Functionally, odorant receptor. Activated by (+) and (-)-carvone. This is Olfactory receptor 1J21 from Mus musculus (Mouse).